The following is a 406-amino-acid chain: 8-amino-7-oxononanoate synthase (406 aa).

Substrate is bound at residue R21. 112-113 serves as a coordination point for pyridoxal 5'-phosphate; the sequence is GY. Substrate is bound at residue H137. Positions 183, 211, and 239 each coordinate pyridoxal 5'-phosphate. The residue at position 242 (K242) is an N6-(pyridoxal phosphate)lysine. T358 provides a ligand contact to substrate.

Belongs to the class-II pyridoxal-phosphate-dependent aminotransferase family. BioF subfamily. In terms of assembly, homodimer. The cofactor is pyridoxal 5'-phosphate.

The catalysed reaction is 6-carboxyhexanoyl-[ACP] + L-alanine + H(+) = (8S)-8-amino-7-oxononanoate + holo-[ACP] + CO2. Its pathway is cofactor biosynthesis; biotin biosynthesis. Functionally, catalyzes the decarboxylative condensation of pimeloyl-[acyl-carrier protein] and L-alanine to produce 8-amino-7-oxononanoate (AON), [acyl-carrier protein], and carbon dioxide. The chain is 8-amino-7-oxononanoate synthase from Burkholderia orbicola (strain MC0-3).